Here is a 237-residue protein sequence, read N- to C-terminus: Lectin (237 aa).

Asn69 carries an N-linked (GlcNAc...) asparagine glycan. At Ile106 the chain carries Blocked amino end (Ile). Positions 115 and 117 each coordinate Mn(2+). Residues Asp117, Tyr120, Asn122, and Asp127 each coordinate Ca(2+). 2 residues coordinate Mn(2+): Asp127 and His132.

It belongs to the leguminous lectin family. In terms of assembly, tetramer of two alpha and two beta chains. The N-terminus of alpha chain is blocked. The alpha and beta chains are produced by proteolytic processing, with probably the loss of intervening amino acid(s).

D-mannose/D-glucose-binding lectin. Requires Ca(2+) and Mn(2+) ions for full activity. The chain is Lectin from Lablab purpureus (Hyacinth bean).